The primary structure comprises 481 residues: Aspartyl/glutamyl-tRNA(Asn/Gln) amidotransferase subunit B (481 aa).

The protein belongs to the GatB/GatE family. GatB subfamily. Heterotrimer of A, B and C subunits.

The enzyme catalyses L-glutamyl-tRNA(Gln) + L-glutamine + ATP + H2O = L-glutaminyl-tRNA(Gln) + L-glutamate + ADP + phosphate + H(+). It catalyses the reaction L-aspartyl-tRNA(Asn) + L-glutamine + ATP + H2O = L-asparaginyl-tRNA(Asn) + L-glutamate + ADP + phosphate + 2 H(+). In terms of biological role, allows the formation of correctly charged Asn-tRNA(Asn) or Gln-tRNA(Gln) through the transamidation of misacylated Asp-tRNA(Asn) or Glu-tRNA(Gln) in organisms which lack either or both of asparaginyl-tRNA or glutaminyl-tRNA synthetases. The reaction takes place in the presence of glutamine and ATP through an activated phospho-Asp-tRNA(Asn) or phospho-Glu-tRNA(Gln). This is Aspartyl/glutamyl-tRNA(Asn/Gln) amidotransferase subunit B from Pseudomonas savastanoi pv. phaseolicola (strain 1448A / Race 6) (Pseudomonas syringae pv. phaseolicola (strain 1448A / Race 6)).